The primary structure comprises 245 residues: 1-(5-phosphoribosyl)-5-[(5-phosphoribosylamino)methylideneamino] imidazole-4-carboxamide isomerase (245 aa).

Asp7 acts as the Proton acceptor in catalysis. Asp129 serves as the catalytic Proton donor.

Belongs to the HisA/HisF family.

Its subcellular location is the cytoplasm. It catalyses the reaction 1-(5-phospho-beta-D-ribosyl)-5-[(5-phospho-beta-D-ribosylamino)methylideneamino]imidazole-4-carboxamide = 5-[(5-phospho-1-deoxy-D-ribulos-1-ylimino)methylamino]-1-(5-phospho-beta-D-ribosyl)imidazole-4-carboxamide. The protein operates within amino-acid biosynthesis; L-histidine biosynthesis; L-histidine from 5-phospho-alpha-D-ribose 1-diphosphate: step 4/9. This chain is 1-(5-phosphoribosyl)-5-[(5-phosphoribosylamino)methylideneamino] imidazole-4-carboxamide isomerase, found in Escherichia coli O6:K15:H31 (strain 536 / UPEC).